A 245-amino-acid polypeptide reads, in one-letter code: MEIRPPCRAPVPCGNPPTLPGAGAVWKSAHLAGRRCCVEIRPPCRAPVPCGNPPTLPGAGAVWESAHLAGRRCRVGIRPPCRAPVLCGNPPTLPGAGAVWESAHLAGRRCRVGIRPPCRAPVLCGNPPTVAGRRCRVGIRPPCRASVPCGNPPTLPGAGAVWKFAHLHDKNLSNDRLMCADLCQTGFCLSIIENRNFPESSILYLASKGVFSFICLRAGSRKDRFNSAKFFCWDSGKRKRSFNQA.

This is an uncharacterized protein from Escherichia coli.